The chain runs to 474 residues: UDP-N-acetylmuramate--L-alanine ligase (474 aa).

Residue 122-128 (GTHGKTT) participates in ATP binding.

It belongs to the MurCDEF family.

Its subcellular location is the cytoplasm. It carries out the reaction UDP-N-acetyl-alpha-D-muramate + L-alanine + ATP = UDP-N-acetyl-alpha-D-muramoyl-L-alanine + ADP + phosphate + H(+). Its pathway is cell wall biogenesis; peptidoglycan biosynthesis. In terms of biological role, cell wall formation. The polypeptide is UDP-N-acetylmuramate--L-alanine ligase (Saccharophagus degradans (strain 2-40 / ATCC 43961 / DSM 17024)).